A 343-amino-acid chain; its full sequence is S-adenosylmethionine:tRNA ribosyltransferase-isomerase (343 aa).

The protein belongs to the QueA family. Monomer.

The protein resides in the cytoplasm. It carries out the reaction 7-aminomethyl-7-carbaguanosine(34) in tRNA + S-adenosyl-L-methionine = epoxyqueuosine(34) in tRNA + adenine + L-methionine + 2 H(+). The protein operates within tRNA modification; tRNA-queuosine biosynthesis. Its function is as follows. Transfers and isomerizes the ribose moiety from AdoMet to the 7-aminomethyl group of 7-deazaguanine (preQ1-tRNA) to give epoxyqueuosine (oQ-tRNA). The chain is S-adenosylmethionine:tRNA ribosyltransferase-isomerase from Pseudoalteromonas translucida (strain TAC 125).